The following is a 105-amino-acid chain: Large ribosomal subunit protein uL24 (105 aa).

This sequence belongs to the universal ribosomal protein uL24 family. In terms of assembly, part of the 50S ribosomal subunit.

Its function is as follows. One of two assembly initiator proteins, it binds directly to the 5'-end of the 23S rRNA, where it nucleates assembly of the 50S subunit. Functionally, one of the proteins that surrounds the polypeptide exit tunnel on the outside of the subunit. This chain is Large ribosomal subunit protein uL24, found in Aliivibrio salmonicida (strain LFI1238) (Vibrio salmonicida (strain LFI1238)).